Here is a 261-residue protein sequence, read N- to C-terminus: Small ribosomal subunit protein eS1B (261 aa).

The span at 1–18 shows a compositional bias: basic residues; that stretch reads MTLGKNKRISKGGKRGKK. The interval 1–23 is disordered; the sequence is MTLGKNKRISKGGKRGKKKAQET.

It belongs to the eukaryotic ribosomal protein eS1 family. As to quaternary structure, component of the small ribosomal subunit. Mature ribosomes consist of a small (40S) and a large (60S) subunit. The 40S subunit contains about 33 different proteins and 1 molecule of RNA (18S). The 60S subunit contains about 49 different proteins and 3 molecules of RNA (25S, 5.8S and 5S).

The protein localises to the cytoplasm. The sequence is that of Small ribosomal subunit protein eS1B from Trypanosoma cruzi (strain CL Brener).